The following is a 387-amino-acid chain: Short-chain dehydrogenase/reductase family 42E member 1 (387 aa).

Residue Tyr-149 is the Proton acceptor of the active site. Lys-153 is an NAD(+) binding site. A run of 2 helical transmembrane segments spans residues 279-299 and 365-385; these read LPIS…FVVG and ILDV…LPVV.

The protein belongs to the 3-beta-HSD family.

Its subcellular location is the membrane. The chain is Short-chain dehydrogenase/reductase family 42E member 1 (sdr42e1) from Danio rerio (Zebrafish).